Reading from the N-terminus, the 1024-residue chain is Error-prone DNA polymerase (1024 aa).

This sequence belongs to the DNA polymerase type-C family. DnaE2 subfamily.

The protein resides in the cytoplasm. The catalysed reaction is DNA(n) + a 2'-deoxyribonucleoside 5'-triphosphate = DNA(n+1) + diphosphate. DNA polymerase involved in damage-induced mutagenesis and translesion synthesis (TLS). It is not the major replicative DNA polymerase. In Vibrio parahaemolyticus serotype O3:K6 (strain RIMD 2210633), this protein is Error-prone DNA polymerase.